The chain runs to 128 residues: uncharacterized protein (128 aa).

3 helical membrane-spanning segments follow: residues 19-41, 54-71, and 75-97; these read MAIV…YVGS, LTFL…SIMQ, and PLIA…VDNL.

The protein localises to the cell membrane. This is an uncharacterized protein from Pasteurella multocida (strain Pm70).